The sequence spans 298 residues: Small ribosomal subunit protein uS2 (298 aa).

Positions glutamate 232–glutamate 298 are disordered. Over residues phenylalanine 234–proline 250 the composition is skewed to acidic residues. Residues glutamate 251–alanine 276 show a composition bias toward low complexity.

This sequence belongs to the universal ribosomal protein uS2 family.

The polypeptide is Small ribosomal subunit protein uS2 (Acaryochloris marina (strain MBIC 11017)).